The following is a 186-amino-acid chain: Adenylate kinase (186 aa).

Residue 11 to 16 participates in ATP binding; it reads GAGKGT. An NMP region spans residues 31 to 60; that stretch reads STGDILRAAVKNGTAMGIEAKKYMDAGDLV. AMP-binding positions include Thr-32, Arg-37, 58–60, 86–89, and Gln-93; these read DLV and GFPR. An LID region spans residues 127-137; sequence GRAIKEGRSDD. Residue Arg-128 coordinates ATP. AMP is bound by residues Arg-134 and Arg-145. Gly-173 lines the ATP pocket.

It belongs to the adenylate kinase family. In terms of assembly, monomer.

It is found in the cytoplasm. It catalyses the reaction AMP + ATP = 2 ADP. Its pathway is purine metabolism; AMP biosynthesis via salvage pathway; AMP from ADP: step 1/1. Catalyzes the reversible transfer of the terminal phosphate group between ATP and AMP. Plays an important role in cellular energy homeostasis and in adenine nucleotide metabolism. This Leptospira biflexa serovar Patoc (strain Patoc 1 / Ames) protein is Adenylate kinase.